Here is a 92-residue protein sequence, read N- to C-terminus: DNA/RNA-binding protein Alba (92 aa).

Position 11 is an N6-acetyllysine (Lys-11).

The protein belongs to the histone-like Alba family. Acetylated. Acetylation at Lys-11 decreases DNA-binding affinity.

The protein localises to the cytoplasm. Its subcellular location is the chromosome. Its function is as follows. Binds double-stranded DNA tightly but without sequence specificity. Involved in DNA compaction. This is DNA/RNA-binding protein Alba from Pyrobaculum calidifontis (strain DSM 21063 / JCM 11548 / VA1).